Here is a 337-residue protein sequence, read N- to C-terminus: 2-oxoglutarate receptor 1 (337 aa).

Residues 1–37 (MIETLDSPANDSDFLDYITALENCTDEQISFKMQYLP) lie on the Extracellular side of the membrane. Asparagine 23 carries an N-linked (GlcNAc...) asparagine glycan. Residues 38–58 (VIYSIIFLVGFPGNTVAISIY) form a helical membrane-spanning segment. Over 59-69 (VFKMRPWKSST) the chain is Cytoplasmic. A helical transmembrane segment spans residues 70 to 90 (IIMLNLALTDLLYLTSLPFLI). Residues 91–116 (HYYASGENWIFGDFMCKFIRFGFHFN) are Extracellular-facing. The cysteines at positions 106 and 183 are disulfide-linked. A helical membrane pass occupies residues 117–137 (LYSSILFLTCFSLFRYIVIIH). Topologically, residues 138–151 (PMSCFSIQKTRWAV) are cytoplasmic. The chain crosses the membrane as a helical span at residues 152 to 172 (VACAGVWVISLVAVMPMTFLI). Residues 173–200 (TSTTRTNRSACLDLTSSDDLTTIKWYNL) are Extracellular-facing. A helical membrane pass occupies residues 201–221 (ILTATTFCLPLLIVTLCYTTI). Over 222 to 242 (ISTLTHGPRTHSCFKQKARRL) the chain is Cytoplasmic. Residues 243–263 (TILLLLVFYVCFLPFHILRVI) traverse the membrane as a helical segment. The Extracellular segment spans residues 264-284 (RIESRLLSISCSIESHIHEAY). The chain crosses the membrane as a helical span at residues 285-305 (IVSRPLAALNTFGNLLLYVVV). Topologically, residues 306 to 337 (SNNFQQAFCSAVRCKAIGDLEQAKKDSCSNNP) are cytoplasmic.

Belongs to the G-protein coupled receptor 1 family. In terms of tissue distribution, highly expressed in mast cells and is found predominantly in the tissues of the respiratory tract and kidneys.

The protein resides in the cell membrane. Its function is as follows. G protein-coupled receptor for dicarboxylates and amino dicarboxylates. Receptor for itaconate, a metabolite produced by myeloid lineages. In the respiratory epithelium, couples the binding of itaconate to the activation of GNA11 and downstream intracellular Ca(2+) release, leading to mucocilliary clearance of airborne pathogens. Receptor for leukotriene E4 (LTE4) produced by mast cells upon allergic inflammation. Binds with high affinity to LTE4 and elicits mucin release from pulmonary epithelium in response to airborne fungi allergens. Regulates mucin-producing goblet cell homeostasis. Receptor for alpha-ketoglutarate produced by proximal tubule renal cells upon metabolic alkalosis. In an intrarenal paracrine signaling pathway, binds alpha-ketoglutarate and drives transepithelial salt reabsorption and bicarbonate secretion by SLC26A4/pendrin-positive intercalated cells. The sequence is that of 2-oxoglutarate receptor 1 (Oxgr1) from Rattus norvegicus (Rat).